The chain runs to 278 residues: MVKLMNLWSERIKDREVVEVIGCERVPLNETLNEIVVLFDEYTKRGDYKVEIFDDVFNYYHNRILTNDEFIDGVARIKLGLDTRNHAKEWLLEVVNWFAGNRYNLRDEEIKLGNRLRDWMNIGVSLVIPKELKPKFDEFYKMAKKFDWQVEIRNEMIFKTTLNGKEVYTFILMGDVVNERLDNILDGGGVFDLGKRVVCDDEWFSGWLVRDIDVNKNIMEVLGMLSLKSQEILDISVESALIRRKNIKTKSMVVKLVKVKNLIQLLKRKKKSGLNCLV.

This is an uncharacterized protein from Methanocaldococcus jannaschii (strain ATCC 43067 / DSM 2661 / JAL-1 / JCM 10045 / NBRC 100440) (Methanococcus jannaschii).